The sequence spans 62 residues: Large ribosomal subunit protein uL30 (62 aa).

The protein belongs to the universal ribosomal protein uL30 family. In terms of assembly, part of the 50S ribosomal subunit.

This chain is Large ribosomal subunit protein uL30, found in Dinoroseobacter shibae (strain DSM 16493 / NCIMB 14021 / DFL 12).